The chain runs to 2364 residues: Cytotoxin-L (2364 aa).

A four-helical bundle region spans residues 1 to 91 (MNLVNKAQLQ…EVLELKNNSL (91 aa)). Positions 96-468 (KNLHFIWIGG…APDVRSTINL (373 aa)) constitute a GT44 domain. Residues 96-468 (KNLHFIWIGG…APDVRSTINL (373 aa)) form a glucosyltransferase region region. Residues 101–103 (IWI), N139, 265–270 (LAAASD), and 286–288 (DVD) contribute to the UDP-alpha-D-glucose site. The Mg(2+) site is built by D288, E515, and S518. 518–520 (SLW) contributes to the UDP-alpha-D-glucose binding site. The interval 544–799 (GEDDNLDFAQ…KSKYLHELST (256 aa)) is autoprocessing region. Positions 545 and 546 each coordinate Zn(2+). The Peptidase C80 domain occupies 567-774 (LSSMKTRNKE…EESIIKDISS (208 aa)). 1D-myo-inositol hexakisphosphate-binding residues include Y577, K600, and K647. H653 is a Zn(2+) binding site. The For protease activity role is filled by H653. The Nucleophile; for protease activity role is filled by C698. H757 contacts Zn(2+). 1D-myo-inositol hexakisphosphate-binding residues include K764, K775, and K792. The interval 800 to 1500 (LLQEIRNNAN…ESIIRNIYMP (701 aa)) is translocation region. Interaction with host SEMA6A and SEMA6B stretches follow at residues 1433–1438 (CMKLIE), 1466–1471 (DNETKY), 1484–1495 (FTAEFSNESIIR), 1504–1511 (NLFIYSSK), and 1596–1601 (YNNLDP). Cell wall-binding repeat units lie at residues 1813–1832 (EFGL…FGNM), 1833–1852 (VSGL…PKNN), 1854–1873 (ITGF…TKSG), 1876–1895 (SIGE…QGIL), 1926–1945 (FIGK…NYRA), 1946–1965 (AVEW…KTGE), 1967–1986 (LKGL…NGIM), 1987–2006 (QTGF…DGVM), 2007–2026 (QVGY…NGER), 2057–2076 (YNGI…SNTA), 2077–2097 (VVGW…NTAE), 2099–2118 (CIGL…NGIR), 2119–2138 (QLGF…SGKI), 2139–2158 (ELGY…SGLV), 2209–2224 (ETGW…YFDP), 2227–2249 (KKAY…NGIM), 2250–2269 (RTGL…DGKM), 2270–2289 (QFGY…DGKM), 2320–2339 (YTGW…EYIA), and 2340–2359 (ATGS…DTAE). A receptor-binding (CROPS) region region spans residues 1835–2364 (GLIYINDSLY…PDTAELVVSE (530 aa)).

This sequence belongs to the clostridial glucosylating toxin (LCGT) family. As to quaternary structure, homomultimer; forms an inactive homomultimer at pH 8, which dissociates at pH 4, leading to cytotoxicity. Interacts with host SEMA6A; interaction promotes toxin entry into host cell. Interacts with host SEMA6B; interaction promotes toxin entry into host cell. Zn(2+) serves as cofactor. Mn(2+) is required as a cofactor. The cofactor is Mg(2+). Post-translationally, undergoes autocatalytic cleavage to release the N-terminal part (Glucosyltransferase TcsL), which constitutes the active part of the toxin, in the host cytosol. 1D-myo-inositol hexakisphosphate-binding (InsP6) activates the peptidase C80 domain and promotes autoprocessing.

It localises to the secreted. The protein resides in the host endosome membrane. It is found in the host cytoplasm. Its subcellular location is the host cytosol. The protein localises to the host cell membrane. It carries out the reaction L-threonyl-[protein] + UDP-alpha-D-glucose = 3-O-(alpha-D-glucosyl)-L-threonyl-[protein] + UDP + H(+). Protease activity is activated upon binding to 1D-myo-inositol hexakisphosphate (InsP6), which induces conformational reorganization. Precursor of a cytotoxin that targets the vascular endothelium, inducing an anti-inflammatory effect and resulting in lethal toxic shock syndrome. TcsL constitutes the main toxin that mediates the pathology of P.sordellii infection, an anaerobic Gram-positive bacterium found in soil and in the gastrointestinal and vaginal tracts of animals and humans; although the majority of carriers are asymptomatic, pathogenic P.sordellii infections arise rapidly and are highly lethal. This form constitutes the precursor of the toxin: it enters into host cells and mediates autoprocessing to release the active toxin (Glucosyltransferase TcsL) into the host cytosol. Targets vascular endothelium by binding to the semaphorin proteins SEMA6A and SEMA6B, and enters host cells via clathrin-mediated endocytosis. Once entered into host cells, acidification in the endosome promotes the membrane insertion of the translocation region and formation of a pore, leading to translocation of the GT44 and peptidase C80 domains across the endosomal membrane. This activates the peptidase C80 domain and autocatalytic processing, releasing the N-terminal part (Glucosyltransferase TcsL), which constitutes the active part of the toxin, in the cytosol. Its function is as follows. Active form of the toxin, which is released into the host cytosol following autoprocessing and inactivates small GTPases. Acts by mediating monoglucosylation of small GTPases of the Ras (H-Ras/HRAS, K-Ras/KRAS and N-Ras/NRAS) family in host cells at the conserved threonine residue located in the switch I region ('Thr-37/35'), using UDP-alpha-D-glucose as the sugar donor. Also able to catalyze monoglucosylation of some members of the Rho family (Rac1 and Rap2A), but with less efficiency than with Ras proteins. Monoglucosylation of host small GTPases completely prevents the recognition of the downstream effector, blocking the GTPases in their inactive form and leading to apoptosis. Induces an anti-inflammatory effect, mainly by inactivating Ras proteins which results in blockage of the cell cycle and killing of immune cells. The absence or moderate local inflammatory response allows C.sordellii spreading in deep tissues, production of toxin which is released in the general circulation and causes a toxic shock syndrome. The protein is Cytotoxin-L of Paraclostridium sordellii (strain ATCC 9714 / DSM 2141 / JCM 3814 / LMG 15708 / NCIMB 10717 / 211) (Clostridium sordellii).